Here is a 237-residue protein sequence, read N- to C-terminus: Ubiquinone biosynthesis O-methyltransferase (237 aa).

Residues R38, G58, D79, and M124 each contribute to the S-adenosyl-L-methionine site.

The protein belongs to the methyltransferase superfamily. UbiG/COQ3 family.

The enzyme catalyses a 3-demethylubiquinol + S-adenosyl-L-methionine = a ubiquinol + S-adenosyl-L-homocysteine + H(+). It carries out the reaction a 3-(all-trans-polyprenyl)benzene-1,2-diol + S-adenosyl-L-methionine = a 2-methoxy-6-(all-trans-polyprenyl)phenol + S-adenosyl-L-homocysteine + H(+). It functions in the pathway cofactor biosynthesis; ubiquinone biosynthesis. O-methyltransferase that catalyzes the 2 O-methylation steps in the ubiquinone biosynthetic pathway. The chain is Ubiquinone biosynthesis O-methyltransferase from Acinetobacter baumannii (strain AB307-0294).